A 244-amino-acid chain; its full sequence is Ubiquitin carboxyl-terminal hydrolase mug105 (244 aa).

The active-site Nucleophile is the C42. H165 acts as the Proton acceptor in catalysis. The active site involves D183.

Belongs to the peptidase C78 family. ZUFSP subfamily.

It localises to the cytoplasm. It catalyses the reaction Thiol-dependent hydrolysis of ester, thioester, amide, peptide and isopeptide bonds formed by the C-terminal Gly of ubiquitin (a 76-residue protein attached to proteins as an intracellular targeting signal).. In terms of biological role, deubiquitinase with endodeubiquitinase activity that preferentially cleaves 'Lys-48'-linked polyubiquitin chains. Shows only weak activity against 'Lys-63' and 'Lys-11'-linked chains. Has a role in meiosis. The polypeptide is Ubiquitin carboxyl-terminal hydrolase mug105 (mug105) (Schizosaccharomyces pombe (strain 972 / ATCC 24843) (Fission yeast)).